A 214-amino-acid chain; its full sequence is Probable transaldolase (214 aa).

Residue lysine 83 is the Schiff-base intermediate with substrate of the active site.

The protein belongs to the transaldolase family. Type 3B subfamily.

Its subcellular location is the cytoplasm. The catalysed reaction is D-sedoheptulose 7-phosphate + D-glyceraldehyde 3-phosphate = D-erythrose 4-phosphate + beta-D-fructose 6-phosphate. Its pathway is carbohydrate degradation; pentose phosphate pathway; D-glyceraldehyde 3-phosphate and beta-D-fructose 6-phosphate from D-ribose 5-phosphate and D-xylulose 5-phosphate (non-oxidative stage): step 2/3. Transaldolase is important for the balance of metabolites in the pentose-phosphate pathway. The polypeptide is Probable transaldolase (Geobacter sulfurreducens (strain ATCC 51573 / DSM 12127 / PCA)).